Reading from the N-terminus, the 450-residue chain is Tripartite motif-containing protein 64C (450 aa).

The RING-type zinc finger occupies 15 to 56; that stretch reads CCICVNYFIDPVTTDCVHSFCRPCLCLCSEEGRAPMRCPLCR. Residues 87-128 form a B box-type zinc finger; the sequence is SSDNICVLHEETKELFCEADKRLLCGPCSESPEHMAHSHSPI. Zn(2+)-binding residues include cysteine 92, histidine 95, cysteine 114, and histidine 120. A coiled-coil region spans residues 191 to 218; sequence DEEEQRHLQALEREAKELFQQLQDSQVR. The 182-residue stretch at 269–450 folds into the B30.2/SPRY domain; sequence ELTSWCITGV…LRPFFCFGCT (182 aa).

The protein belongs to the TRIM/RBCC family.

The chain is Tripartite motif-containing protein 64C (TRIM64C) from Homo sapiens (Human).